The sequence spans 471 residues: DnaJ protein P58IPK homolog B (471 aa).

Positions 1 to 24 (MARWPWRWRVLLPLLLLHSSPVFA) are cleaved as a signal peptide. 8 TPR repeats span residues 32–65 (PSTL…DPNH), 66–99 (SEAY…KPGS), 112–146 (AQNA…SPNC), 148–180 (KAKL…DEDN), 181–214 (LDAL…DPEH), 227–260 (LLKK…DPDH), 265–298 (VHLY…DGEL), and 300–332 (DALT…SPQD). The N-linked (GlcNAc...) asparagine glycan is linked to N64. The J domain maps to 353–419 (DWYKILGISK…DKRVRYDRGE (67 aa)).

As to quaternary structure, interacts with BIP1.

It is found in the endoplasmic reticulum lumen. May play a role in protein folding in the endoplasmic reticulum. This chain is DnaJ protein P58IPK homolog B, found in Oryza sativa subsp. japonica (Rice).